A 387-amino-acid chain; its full sequence is Radial spoke protein 14 (387 aa).

ARM repeat units lie at residues 24-67 (KALP…ELLS), 69-109 (PVNH…LLAA), 111-150 (EVGA…EAAR), 154-198 (TRRA…TCTQ), 204-244 (GILS…ALAT), 245-286 (REDA…AITI), 289-328 (EGKY…NVAE), and 330-370 (PEAR…QCRF).

Belongs to the flagellar radial spoke RSP14 family.

The protein resides in the cytoplasm. It is found in the cytoskeleton. Its subcellular location is the flagellum axoneme. This is Radial spoke protein 14 (RSP14) from Chlamydomonas reinhardtii (Chlamydomonas smithii).